A 394-amino-acid chain; its full sequence is MVKRISILGSTGSIGTQTLDIVTHHPDAFQVVGLAAGGNVALLAQQVAEFRPEIVAIRQAEKLEDLKAAVAELTDYQPMYVVGEEGVVEVARYGDAESVVTGIVGCAGLLPTMAAIAAGKDIALANKETLIAGAPVVLPLVEKMGVKLLPADSEHSAIFQCLQGVPEGGLRRIILTASGGAFRDLPVERLPFVTVQDALKHPNWSMGQKITIDSATLMNKGLEVIEAHYLFGLDYDHIDIVIHPQSIIHSLIEVQDTSVLAQLGWPDMRLPLLYALSWPERIYTDWEPLDLVKAGSLSFREPDHDKYPCMQLAYGAGRAGGAMPAVLNAANEQAVALFLQEKISFLDIPRLIEKTCDLYVGQNTASPDLETILAADQWARRTVLENSACVATRP.

Residues threonine 11, glycine 12, serine 13, isoleucine 14, glycine 37, asparagine 39, and asparagine 126 each coordinate NADPH. Residue lysine 127 participates in 1-deoxy-D-xylulose 5-phosphate binding. Residue glutamate 128 participates in NADPH binding. Mn(2+) is bound at residue aspartate 152. Residues serine 153, glutamate 154, serine 178, and histidine 201 each contribute to the 1-deoxy-D-xylulose 5-phosphate site. A Mn(2+)-binding site is contributed by glutamate 154. Glycine 207 is an NADPH binding site. Positions 214, 219, 220, and 223 each coordinate 1-deoxy-D-xylulose 5-phosphate. Glutamate 223 lines the Mn(2+) pocket.

It belongs to the DXR family. Mg(2+) serves as cofactor. Mn(2+) is required as a cofactor.

The enzyme catalyses 2-C-methyl-D-erythritol 4-phosphate + NADP(+) = 1-deoxy-D-xylulose 5-phosphate + NADPH + H(+). Its pathway is isoprenoid biosynthesis; isopentenyl diphosphate biosynthesis via DXP pathway; isopentenyl diphosphate from 1-deoxy-D-xylulose 5-phosphate: step 1/6. In terms of biological role, catalyzes the NADPH-dependent rearrangement and reduction of 1-deoxy-D-xylulose-5-phosphate (DXP) to 2-C-methyl-D-erythritol 4-phosphate (MEP). This is 1-deoxy-D-xylulose 5-phosphate reductoisomerase from Synechocystis sp. (strain ATCC 27184 / PCC 6803 / Kazusa).